The chain runs to 438 residues: Actin-like protein 7A (438 aa).

The tract at residues 36-56 (ASLKDGPAKRAVWVRRDHSEP) is required for interaction with TES.

Belongs to the actin family. Interacts (via N-terminus) with TES (via LIM domain 2). Heterodimer with TES; the heterodimer interacts with ENAH to form a heterotrimer. Interacts with ACTL9. Interacts with CYLC1; the interaction may be relevant for proper acrosome attachment to the nuclear envelope.

Its subcellular location is the cytoplasm. It localises to the cytoskeleton. The protein localises to the golgi apparatus. It is found in the nucleus. Functionally, essential for normal spermatogenesis and male fertility. Required for normal sperm head morphology, acroplaxome formation, acrosome attachment, and acrosome granule stability. May anchor and stabilize acrosomal adherence to the acroplaxome at least in part by facilitating the presence of F-actin in the subacrosomal space. May play an important role in formation and fusion of Golgi-derived vesicles during acrosome biogenesis. This is Actin-like protein 7A (ACTL7A) from Bos taurus (Bovine).